Reading from the N-terminus, the 194-residue chain is ATP-dependent Clp protease proteolytic subunit (194 aa).

Residue S98 is the Nucleophile of the active site. H123 is a catalytic residue.

It belongs to the peptidase S14 family. In terms of assembly, fourteen ClpP subunits assemble into 2 heptameric rings which stack back to back to give a disk-like structure with a central cavity, resembling the structure of eukaryotic proteasomes.

Its subcellular location is the cytoplasm. The enzyme catalyses Hydrolysis of proteins to small peptides in the presence of ATP and magnesium. alpha-casein is the usual test substrate. In the absence of ATP, only oligopeptides shorter than five residues are hydrolyzed (such as succinyl-Leu-Tyr-|-NHMec, and Leu-Tyr-Leu-|-Tyr-Trp, in which cleavage of the -Tyr-|-Leu- and -Tyr-|-Trp bonds also occurs).. Its function is as follows. Cleaves peptides in various proteins in a process that requires ATP hydrolysis. Has a chymotrypsin-like activity. Plays a major role in the degradation of misfolded proteins. The protein is ATP-dependent Clp protease proteolytic subunit of Actinobacillus succinogenes (strain ATCC 55618 / DSM 22257 / CCUG 43843 / 130Z).